The following is a 102-amino-acid chain: MFAIVRTGGKQYRVAAGDKIVVEKIAGEAGTTVSLEDVLLAGEGADLQPVKGLTVSAEIIAQAKAEKVIVFKKRRRHNYRRRNGHRQQHTILKIVSVGNAAA.

The protein belongs to the bacterial ribosomal protein bL21 family. In terms of assembly, part of the 50S ribosomal subunit. Contacts protein L20.

Functionally, this protein binds to 23S rRNA in the presence of protein L20. The sequence is that of Large ribosomal subunit protein bL21 from Zymomonas mobilis subsp. mobilis (strain ATCC 31821 / ZM4 / CP4).